We begin with the raw amino-acid sequence, 266 residues long: Thymidylate synthase (266 aa).

Residues arginine 21 and 127–128 contribute to the dUMP site; that span reads RR. The Nucleophile role is filled by cysteine 147. DUMP-binding positions include 168 to 171, asparagine 179, and 209 to 211; these read RSAD and HIY. Aspartate 171 serves as a coordination point for (6R)-5,10-methylene-5,6,7,8-tetrahydrofolate. Alanine 265 lines the (6R)-5,10-methylene-5,6,7,8-tetrahydrofolate pocket.

The protein belongs to the thymidylate synthase family. Bacterial-type ThyA subfamily. In terms of assembly, homodimer.

Its subcellular location is the cytoplasm. The catalysed reaction is dUMP + (6R)-5,10-methylene-5,6,7,8-tetrahydrofolate = 7,8-dihydrofolate + dTMP. It participates in pyrimidine metabolism; dTTP biosynthesis. Functionally, catalyzes the reductive methylation of 2'-deoxyuridine-5'-monophosphate (dUMP) to 2'-deoxythymidine-5'-monophosphate (dTMP) while utilizing 5,10-methylenetetrahydrofolate (mTHF) as the methyl donor and reductant in the reaction, yielding dihydrofolate (DHF) as a by-product. This enzymatic reaction provides an intracellular de novo source of dTMP, an essential precursor for DNA biosynthesis. The polypeptide is Thymidylate synthase (Brachyspira hyodysenteriae (strain ATCC 49526 / WA1)).